The sequence spans 1360 residues: DNA-directed RNA polymerase subunit beta (1360 aa).

This sequence belongs to the RNA polymerase beta chain family. In terms of assembly, the RNAP catalytic core consists of 2 alpha, 1 beta, 1 beta' and 1 omega subunit. When a sigma factor is associated with the core the holoenzyme is formed, which can initiate transcription.

It carries out the reaction RNA(n) + a ribonucleoside 5'-triphosphate = RNA(n+1) + diphosphate. In terms of biological role, DNA-dependent RNA polymerase catalyzes the transcription of DNA into RNA using the four ribonucleoside triphosphates as substrates. The polypeptide is DNA-directed RNA polymerase subunit beta (Teredinibacter turnerae (strain ATCC 39867 / T7901)).